We begin with the raw amino-acid sequence, 456 residues long: Probable glycine dehydrogenase (decarboxylating) subunit 1 (456 aa).

The protein belongs to the GcvP family. N-terminal subunit subfamily. As to quaternary structure, the glycine cleavage system is composed of four proteins: P, T, L and H. In this organism, the P 'protein' is a heterodimer of two subunits.

The catalysed reaction is N(6)-[(R)-lipoyl]-L-lysyl-[glycine-cleavage complex H protein] + glycine + H(+) = N(6)-[(R)-S(8)-aminomethyldihydrolipoyl]-L-lysyl-[glycine-cleavage complex H protein] + CO2. The glycine cleavage system catalyzes the degradation of glycine. The P protein binds the alpha-amino group of glycine through its pyridoxal phosphate cofactor; CO(2) is released and the remaining methylamine moiety is then transferred to the lipoamide cofactor of the H protein. The polypeptide is Probable glycine dehydrogenase (decarboxylating) subunit 1 (Legionella pneumophila (strain Paris)).